A 108-amino-acid chain; its full sequence is Phosphoribosyl-ATP pyrophosphatase (108 aa).

The protein belongs to the PRA-PH family.

The protein resides in the cytoplasm. The catalysed reaction is 1-(5-phospho-beta-D-ribosyl)-ATP + H2O = 1-(5-phospho-beta-D-ribosyl)-5'-AMP + diphosphate + H(+). It participates in amino-acid biosynthesis; L-histidine biosynthesis; L-histidine from 5-phospho-alpha-D-ribose 1-diphosphate: step 2/9. The chain is Phosphoribosyl-ATP pyrophosphatase from Geobacter sulfurreducens (strain ATCC 51573 / DSM 12127 / PCA).